A 72-amino-acid chain; its full sequence is Translation initiation factor IF-1 (72 aa).

One can recognise an S1-like domain in the interval 1-72; the sequence is MAKEEVLEFP…TKGRITYRLK (72 aa).

This sequence belongs to the IF-1 family. Component of the 30S ribosomal translation pre-initiation complex which assembles on the 30S ribosome in the order IF-2 and IF-3, IF-1 and N-formylmethionyl-tRNA(fMet); mRNA recruitment can occur at any time during PIC assembly.

The protein localises to the cytoplasm. Functionally, one of the essential components for the initiation of protein synthesis. Stabilizes the binding of IF-2 and IF-3 on the 30S subunit to which N-formylmethionyl-tRNA(fMet) subsequently binds. Helps modulate mRNA selection, yielding the 30S pre-initiation complex (PIC). Upon addition of the 50S ribosomal subunit IF-1, IF-2 and IF-3 are released leaving the mature 70S translation initiation complex. This chain is Translation initiation factor IF-1, found in Brucella suis biovar 1 (strain 1330).